The primary structure comprises 381 residues: Succinyl-diaminopimelate desuccinylase (381 aa).

His-72 is a binding site for Zn(2+). Asp-74 is an active-site residue. Residue Asp-103 coordinates Zn(2+). The active-site Proton acceptor is Glu-133. Glu-134, Glu-163, and His-348 together coordinate Zn(2+).

Belongs to the peptidase M20A family. DapE subfamily. In terms of assembly, homodimer. Zn(2+) is required as a cofactor. Co(2+) serves as cofactor.

The enzyme catalyses N-succinyl-(2S,6S)-2,6-diaminopimelate + H2O = (2S,6S)-2,6-diaminopimelate + succinate. It functions in the pathway amino-acid biosynthesis; L-lysine biosynthesis via DAP pathway; LL-2,6-diaminopimelate from (S)-tetrahydrodipicolinate (succinylase route): step 3/3. In terms of biological role, catalyzes the hydrolysis of N-succinyl-L,L-diaminopimelic acid (SDAP), forming succinate and LL-2,6-diaminopimelate (DAP), an intermediate involved in the bacterial biosynthesis of lysine and meso-diaminopimelic acid, an essential component of bacterial cell walls. This Anaplasma marginale (strain Florida) protein is Succinyl-diaminopimelate desuccinylase.